Here is a 444-residue protein sequence, read N- to C-terminus: Trigger factor (444 aa).

Residues 166 to 251 (GDQVVIDFEG…VHAVKAPKPA (86 aa)) form the PPIase FKBP-type domain.

It belongs to the FKBP-type PPIase family. Tig subfamily.

It localises to the cytoplasm. The catalysed reaction is [protein]-peptidylproline (omega=180) = [protein]-peptidylproline (omega=0). Involved in protein export. Acts as a chaperone by maintaining the newly synthesized protein in an open conformation. Functions as a peptidyl-prolyl cis-trans isomerase. The chain is Trigger factor (tig) from Rhodobacter capsulatus (strain ATCC BAA-309 / NBRC 16581 / SB1003).